Consider the following 478-residue polypeptide: G2/mitotic-specific cyclin-B (478 aa).

Residues M1–R153 form a disordered region. Residues A16–A31 show a composition bias toward low complexity. The span at D65–K74 shows a compositional bias: basic and acidic residues. Polar residues predominate over residues S77–R102. Positions N110–R121 are enriched in basic and acidic residues. The span at K133–T145 shows a compositional bias: polar residues.

Belongs to the cyclin family. Cyclin AB subfamily.

In terms of biological role, essential for the control of the cell cycle at the G2/M (mitosis) transition. Interacts with the CDC2 protein kinase to form MPF. G2/M cyclins accumulate steadily during G2 and are abruptly destroyed at mitosis. This is G2/mitotic-specific cyclin-B (nimE) from Emericella nidulans (strain FGSC A4 / ATCC 38163 / CBS 112.46 / NRRL 194 / M139) (Aspergillus nidulans).